Consider the following 632-residue polypeptide: Chaperone protein HtpG (632 aa).

The interval 1-339 is a; substrate-binding; the sequence is MTQQTMSFQA…SSDLPLNVSR (339 aa). The tract at residues 340 to 559 is b; the sequence is EILQESRDVK…DNDMSGYLQR (220 aa). Residues 560–632 are c; the sequence is MLKAAGQSAP…TNALLLSRAA (73 aa).

Belongs to the heat shock protein 90 family. Homodimer.

The protein localises to the cytoplasm. Its function is as follows. Molecular chaperone. Has ATPase activity. This chain is Chaperone protein HtpG, found in Burkholderia pseudomallei (strain 668).